A 382-amino-acid chain; its full sequence is Chaperone protein DnaJ (382 aa).

A J domain is found at 5–70 (DYYDLLGLSK…DKRAAYDRYG (66 aa)). Residues 138–216 (GTKVPINYVT…CSGSGRVRDE (79 aa)) form a CR-type zinc finger. The Zn(2+) site is built by cysteine 151, cysteine 154, cysteine 168, cysteine 171, cysteine 190, cysteine 193, cysteine 204, and cysteine 207. 4 CXXCXGXG motif repeats span residues 151–158 (CSSCSGSG), 168–175 (CNTCHGAG), 190–197 (CHVCNGEG), and 204–211 (CKKCSGSG).

The protein belongs to the DnaJ family. As to quaternary structure, homodimer. Zn(2+) serves as cofactor.

The protein localises to the cytoplasm. Functionally, participates actively in the response to hyperosmotic and heat shock by preventing the aggregation of stress-denatured proteins and by disaggregating proteins, also in an autonomous, DnaK-independent fashion. Unfolded proteins bind initially to DnaJ; upon interaction with the DnaJ-bound protein, DnaK hydrolyzes its bound ATP, resulting in the formation of a stable complex. GrpE releases ADP from DnaK; ATP binding to DnaK triggers the release of the substrate protein, thus completing the reaction cycle. Several rounds of ATP-dependent interactions between DnaJ, DnaK and GrpE are required for fully efficient folding. Also involved, together with DnaK and GrpE, in the DNA replication of plasmids through activation of initiation proteins. This is Chaperone protein DnaJ from Ehrlichia ruminantium (strain Gardel).